A 377-amino-acid polypeptide reads, in one-letter code: Succinyl-diaminopimelate desuccinylase (377 aa).

His-67 contributes to the Zn(2+) binding site. Asp-69 is an active-site residue. Asp-100 is a Zn(2+) binding site. The Proton acceptor role is filled by Glu-134. Residues Glu-135, Glu-163, and His-349 each contribute to the Zn(2+) site.

This sequence belongs to the peptidase M20A family. DapE subfamily. Homodimer. Zn(2+) serves as cofactor. Co(2+) is required as a cofactor.

It carries out the reaction N-succinyl-(2S,6S)-2,6-diaminopimelate + H2O = (2S,6S)-2,6-diaminopimelate + succinate. Its pathway is amino-acid biosynthesis; L-lysine biosynthesis via DAP pathway; LL-2,6-diaminopimelate from (S)-tetrahydrodipicolinate (succinylase route): step 3/3. In terms of biological role, catalyzes the hydrolysis of N-succinyl-L,L-diaminopimelic acid (SDAP), forming succinate and LL-2,6-diaminopimelate (DAP), an intermediate involved in the bacterial biosynthesis of lysine and meso-diaminopimelic acid, an essential component of bacterial cell walls. The polypeptide is Succinyl-diaminopimelate desuccinylase (Glaesserella parasuis serovar 5 (strain SH0165) (Haemophilus parasuis)).